A 130-amino-acid polypeptide reads, in one-letter code: uncharacterized protein (130 aa).

The next 3 helical transmembrane spans lie at 34-54 (AILIIAFGAGIIYIVPYFAFF), 73-93 (LLLTAYGIVSLLFYIPGGWLA), and 107-127 (FGTGIITFWYFLVGLKGIVWI).

The protein resides in the cell membrane. This is an uncharacterized protein from Mycoplasma pneumoniae (strain ATCC 29342 / M129 / Subtype 1) (Mycoplasmoides pneumoniae).